Consider the following 294-residue polypeptide: MGEWAFLGSLLDAVQLQSPLVGRLWLVVMLIFRILVLATVGGAVFEDEQEEFVCNTLQPGCRQTCYDRAFPVSHYRFWLFHILLLSAPPVLFVVYSMHRAGKEAGGAEAAAQCAPGLPEAQCAPCALRARRARRCYLLSVALRLLAELTFLGGQALLYGFRVAPHFACAGPPCPHTVDCFVSRPTEKTVFVLFYFAVGLLSALLSVAELGHLLWKGRPRAGERDNRCNRAHEEAQKLLPPPPPPPPPPALPSRRPGPEPCAPPAYAHPAPASLRECGSGRGKASPATGRRDLAI.

The Cytoplasmic portion of the chain corresponds to 1 to 24 (MGEWAFLGSLLDAVQLQSPLVGRL). A helical transmembrane segment spans residues 25 to 45 (WLVVMLIFRILVLATVGGAVF). The Extracellular segment spans residues 46–76 (EDEQEEFVCNTLQPGCRQTCYDRAFPVSHYR). The chain crosses the membrane as a helical span at residues 77 to 97 (FWLFHILLLSAPPVLFVVYSM). Over 98-136 (HRAGKEAGGAEAAAQCAPGLPEAQCAPCALRARRARRCY) the chain is Cytoplasmic. A helical membrane pass occupies residues 137–157 (LLSVALRLLAELTFLGGQALL). At 158–188 (YGFRVAPHFACAGPPCPHTVDCFVSRPTEKT) the chain is on the extracellular side. Residues 189–209 (VFVLFYFAVGLLSALLSVAEL) form a helical membrane-spanning segment. The Cytoplasmic portion of the chain corresponds to 210–294 (GHLLWKGRPR…PATGRRDLAI (85 aa)). The interval 233-294 (EAQKLLPPPP…PATGRRDLAI (62 aa)) is disordered. Pro residues predominate over residues 238-250 (LPPPPPPPPPPAL).

The protein belongs to the connexin family. Delta-type subfamily. As to quaternary structure, a connexon is composed of a hexamer of connexins. Interacts with TJP1. In terms of tissue distribution, expressed in vascular smooth muscle cells. Found in heart, colon, and artery (at protein level). Found in cerebral cortex, heart, liver, lung, kidney, spleen and testis.

Its subcellular location is the cell membrane. It is found in the cell junction. It localises to the gap junction. In terms of biological role, one gap junction consists of a cluster of closely packed pairs of transmembrane channels, the connexons, through which materials of low MW diffuse from one cell to a neighboring cell. This chain is Gap junction delta-3 protein (GJD3), found in Homo sapiens (Human).